A 514-amino-acid polypeptide reads, in one-letter code: 2,3-bisphosphoglycerate-independent phosphoglycerate mutase (514 aa).

2 residues coordinate Mn(2+): Asp14 and Ser64. Residue Ser64 is the Phosphoserine intermediate of the active site. Substrate is bound by residues His125, 155-156, Arg187, Arg193, 263-266, and Lys336; these read RD and RADR. Mn(2+) contacts are provided by Asp403, His407, Asp444, His445, and His463.

The protein belongs to the BPG-independent phosphoglycerate mutase family. In terms of assembly, monomer. Mn(2+) is required as a cofactor.

The enzyme catalyses (2R)-2-phosphoglycerate = (2R)-3-phosphoglycerate. It functions in the pathway carbohydrate degradation; glycolysis; pyruvate from D-glyceraldehyde 3-phosphate: step 3/5. Catalyzes the interconversion of 2-phosphoglycerate and 3-phosphoglycerate. The protein is 2,3-bisphosphoglycerate-independent phosphoglycerate mutase of Escherichia coli (strain ATCC 8739 / DSM 1576 / NBRC 3972 / NCIMB 8545 / WDCM 00012 / Crooks).